The primary structure comprises 287 residues: Cyclopropane mycolic acid synthase MmaA2 (287 aa).

S-adenosyl-L-methionine is bound by residues 33–34 (YS), 72–74 (GCG), 94–99 (TLSKNQ), 123–124 (WE), and Ile136. Cys269 is a catalytic residue.

Belongs to the CFA/CMAS family.

It catalyses the reaction a 1-acyl-2-(9Z)-enoyl-sn-glycero-3-phospholipid + S-adenosyl-L-methionine = a 1-acyl-2-(9-cyclopronane)-acyl-sn-glycero-3-phospholipid + S-adenosyl-L-homocysteine + H(+). It functions in the pathway lipid metabolism; mycolic acid biosynthesis. Catalyzes the conversion of a double bond to a cis cyclopropane ring at the distal position of an alpha mycolic acid via the transfer of a methylene group from S-adenosyl-L-methionine. MmaA2 also catalyzes the biosynthesis of the cis-cyclopropanated methoxymycolates. Cyclopropanated mycolic acids are key factors participating in cell envelope permeability, host immunomodulation and persistence. The polypeptide is Cyclopropane mycolic acid synthase MmaA2 (cmaC) (Mycobacterium bovis (strain ATCC BAA-935 / AF2122/97)).